We begin with the raw amino-acid sequence, 312 residues long: UDP-N-acetylenolpyruvoylglucosamine reductase (312 aa).

One can recognise an FAD-binding PCMH-type domain in the interval 33–199 (RVGGKAEWYC…TGATLQLLPG (167 aa)). The active site involves Arg-178. Ser-229 serves as the catalytic Proton donor. Glu-299 is a catalytic residue.

The protein belongs to the MurB family. FAD serves as cofactor.

Its subcellular location is the cytoplasm. It carries out the reaction UDP-N-acetyl-alpha-D-muramate + NADP(+) = UDP-N-acetyl-3-O-(1-carboxyvinyl)-alpha-D-glucosamine + NADPH + H(+). The protein operates within cell wall biogenesis; peptidoglycan biosynthesis. In terms of biological role, cell wall formation. In Synechococcus sp. (strain JA-3-3Ab) (Cyanobacteria bacterium Yellowstone A-Prime), this protein is UDP-N-acetylenolpyruvoylglucosamine reductase.